Here is a 533-residue protein sequence, read N- to C-terminus: Thromboxane-A synthase (533 aa).

The Cytoplasmic segment spans residues 1 to 10 (MEVLGLLKFE). A helical membrane pass occupies residues 11–31 (VSGTIVTVTLLVALLALLKWY). The Lumenal portion of the chain corresponds to 32 to 75 (SMSAFSRLEKLGIRHPKPSPFVGNLMFFRQGFWESQLELRERYG). The helical transmembrane segment at 76-96 (PLCGYYLGRRMHVVISEPDMI) threads the bilayer. Residues 97–223 (KQVLVENFSN…RRASTFCIPR (127 aa)) lie on the Cytoplasmic side of the membrane. A helical membrane pass occupies residues 224–244 (PLLVLILSFPSIMVPLARILP). The Lumenal segment spans residues 245-335 (NKNRDELNGF…FTVDEIVGQA (91 aa)). A helical membrane pass occupies residues 336–356 (FLFLIAGHEVITNTLSFITYL). At 357 to 533 (LATHPDCQER…NGVYIKIVSR (177 aa)) the chain is on the cytoplasmic side. Cys479 is a heme binding site.

It belongs to the cytochrome P450 family. As to quaternary structure, monomer. The cofactor is heme. In terms of tissue distribution, expressed primarily in lung, kidney, and spleen.

Its subcellular location is the endoplasmic reticulum membrane. The enzyme catalyses prostaglandin H2 = thromboxane A2. The catalysed reaction is prostaglandin H2 = (12S)-hydroxy-(5Z,8E,10E)-heptadecatrienoate + malonaldehyde. It catalyses the reaction a hydroperoxyeicosatetraenoate = an oxoeicosatetraenoate + H2O. It carries out the reaction (15S)-hydroperoxy-(5Z,8Z,11Z,13E)-eicosatetraenoate = 15-oxo-(5Z,8Z,11Z,13E)-eicosatetraenoate + H2O. The enzyme catalyses (15S)-hydroperoxy-(5Z,8Z,11Z,13E)-eicosatetraenoate + AH2 = (15S)-hydroxy-(5Z,8Z,11Z,13E)-eicosatetraenoate + A + H2O. In terms of biological role, catalyzes the conversion of prostaglandin H2 (PGH2) to thromboxane A2 (TXA2), a potent inducer of blood vessel constriction and platelet aggregation. Also cleaves PGH2 to 12-hydroxy-heptadecatrienoicacid (12-HHT) and malondialdehyde, which is known to act as a mediator of DNA damage. 12-HHT and malondialdehyde are formed stoichiometrically in the same amounts as TXA2. Additionally, displays dehydratase activity, toward (15S)-hydroperoxy-(5Z,8Z,11Z,13E)-eicosatetraenoate (15(S)-HPETE) producing 15-KETE and 15-HETE. The polypeptide is Thromboxane-A synthase (Tbxas1) (Mus musculus (Mouse)).